The following is a 391-amino-acid chain: Processive diacylglycerol beta-glucosyltransferase (391 aa).

It belongs to the glycosyltransferase 28 family. UgtP subfamily.

The protein resides in the cell membrane. The enzyme catalyses a 1,2-diacyl-3-O-(beta-D-glucopyranosyl)-sn-glycerol + UDP-alpha-D-glucose = a 1,2-diacyl-3-O-(beta-D-Glc-(1-&gt;6)-beta-D-Glc)-sn-glycerol + UDP + H(+). The catalysed reaction is a 1,2-diacyl-sn-glycerol + UDP-alpha-D-glucose = a 1,2-diacyl-3-O-(beta-D-glucopyranosyl)-sn-glycerol + UDP + H(+). It functions in the pathway glycolipid metabolism; diglucosyl-diacylglycerol biosynthesis. Processive glucosyltransferase involved in the biosynthesis of both the bilayer- and non-bilayer-forming membrane glucolipids. Is able to successively transfer two glucosyl residues to diacylglycerol (DAG), thereby catalyzing the formation of beta-monoglucosyl-DAG (3-O-(beta-D-glucopyranosyl)-1,2-diacyl-sn-glycerol) and beta-diglucosyl-DAG (3-O-(beta-D-glucopyranosyl-beta-(1-&gt;6)-D-glucopyranosyl)-1,2-diacyl-sn-glycerol). Beta-diglucosyl-DAG is the predominant glycolipid found in Bacillales and is also used as a membrane anchor for lipoteichoic acid (LTA). The sequence is that of Processive diacylglycerol beta-glucosyltransferase from Staphylococcus aureus (strain MRSA252).